We begin with the raw amino-acid sequence, 832 residues long: Translation initiation factor IF-2 (832 aa).

Positions 1 to 249 (MSDDNDKPRT…GGGSSAPREK (249 aa)) are disordered. Residues 53–71 (TPAPAPEPAPEPAPAPAPA) show a composition bias toward pro residues. Over residues 89–144 (PQERVARLQREAEEERLKLAEDARKRDDQKAKQNADDEKKRQEENKKAEEEAEKQA) the composition is skewed to basic and acidic residues. A compositionally biased stretch (low complexity) spans 145-156 (AAEAEAAAAAEA). Positions 180 to 200 (PEPKRPEKKKEEKKPARGGAK) are enriched in basic and acidic residues. The tr-type G domain occupies 333-503 (PRPPVVTIMG…ELQAELLELK (171 aa)). The segment at 342 to 349 (GHVDHGKT) is G1. 342–349 (GHVDHGKT) serves as a coordination point for GTP. A G2 region spans residues 367–371 (GITQH). Residues 389–392 (DTPG) are G3. Residues 389 to 393 (DTPGH) and 443 to 446 (NKCD) each bind GTP. The segment at 443-446 (NKCD) is G4. The tract at residues 479-481 (SAT) is G5.

It belongs to the TRAFAC class translation factor GTPase superfamily. Classic translation factor GTPase family. IF-2 subfamily.

The protein localises to the cytoplasm. In terms of biological role, one of the essential components for the initiation of protein synthesis. Protects formylmethionyl-tRNA from spontaneous hydrolysis and promotes its binding to the 30S ribosomal subunits. Also involved in the hydrolysis of GTP during the formation of the 70S ribosomal complex. This Erythrobacter litoralis (strain HTCC2594) protein is Translation initiation factor IF-2.